The sequence spans 354 residues: Uroporphyrinogen decarboxylase (354 aa).

Residues 25-29 (RQAGR), D75, Y152, T207, and H330 contribute to the substrate site.

This sequence belongs to the uroporphyrinogen decarboxylase family. In terms of assembly, homodimer.

The protein resides in the cytoplasm. The enzyme catalyses uroporphyrinogen III + 4 H(+) = coproporphyrinogen III + 4 CO2. The protein operates within porphyrin-containing compound metabolism; protoporphyrin-IX biosynthesis; coproporphyrinogen-III from 5-aminolevulinate: step 4/4. Catalyzes the decarboxylation of four acetate groups of uroporphyrinogen-III to yield coproporphyrinogen-III. The sequence is that of Uroporphyrinogen decarboxylase from Xanthomonas oryzae pv. oryzae (strain PXO99A).